Reading from the N-terminus, the 507-residue chain is Maturase K (507 aa).

It belongs to the intron maturase 2 family. MatK subfamily.

It localises to the plastid. The protein resides in the chloroplast. In terms of biological role, usually encoded in the trnK tRNA gene intron. Probably assists in splicing its own and other chloroplast group II introns. In Browningia hertlingiana (Cactus), this protein is Maturase K.